The chain runs to 1262 residues: Histone-lysine N-methyltransferase eggless (1262 aa).

A disordered region spans residues methionine 1 to serine 194. Composition is skewed to basic and acidic residues over residues alanine 26–asparagine 41, alanine 50–histidine 61, and alanine 81–asparagine 99. The segment covering serine 157–serine 166 has biased composition (low complexity). Basic and acidic residues predominate over residues phenylalanine 167 to glutamate 179. Serine 215 carries the post-translational modification Phosphoserine. A Phosphothreonine modification is found at threonine 217. Residues glutamate 353–lysine 420 are a coiled coil. 2 consecutive Tudor domains span residues arginine 529–valine 602 and glutamine 629–glutamine 686. Positions serine 743 to alanine 764 are disordered. Positions leucine 818–lysine 884 constitute an MBD domain. The Pre-SET domain occupies leucine 946–serine 1018. Positions 948, 950, 954, 960, 962, 1000, 1004, 1006, and 1010 each coordinate Zn(2+). The SET domain maps to methionine 1021–asparagine 1237. Residues arginine 1031–tryptophan 1033, aspartate 1069, and tyrosine 1071 each bind S-adenosyl-L-methionine. The span at glutamate 1086–proline 1097 shows a compositional bias: basic and acidic residues. Residues glutamate 1086–arginine 1148 form a disordered region. Positions aspartate 1098–aspartate 1113 are enriched in acidic residues. Residues arginine 1129–serine 1141 show a composition bias toward low complexity. S-adenosyl-L-methionine is bound by residues arginine 1191 and asparagine 1194–histidine 1195. Zn(2+) contacts are provided by cysteine 1197, cysteine 1250, cysteine 1252, and cysteine 1257. The Post-SET domain occupies lysine 1246–leucine 1262.

It belongs to the class V-like SAM-binding methyltransferase superfamily. Histone-lysine methyltransferase family. Suvar3-9 subfamily. In terms of tissue distribution, expressed in ovary (at protein level).

Its subcellular location is the nucleus. It localises to the chromosome. It carries out the reaction L-lysyl(9)-[histone H3] + 3 S-adenosyl-L-methionine = N(6),N(6),N(6)-trimethyl-L-lysyl(9)-[histone H3] + 3 S-adenosyl-L-homocysteine + 3 H(+). Its function is as follows. Histone methyltransferase that specifically trimethylates 'Lys-10' of histone H3 (H3K9me3) in ovary. H3K9me3 represents a specific tag for epigenetic transcriptional repression by recruiting Su(var)205/HP1 to methylated histones. Plays a central role during oogenesis. This is Histone-lysine N-methyltransferase eggless (egg) from Drosophila melanogaster (Fruit fly).